A 515-amino-acid polypeptide reads, in one-letter code: Protein disulfide-isomerase (515 aa).

A signal peptide spans Met-1–Ala-22. 2 consecutive Thioredoxin domains span residues Glu-23 to Gly-139 and Phe-351 to Gln-480. Residues Cys-58, Cys-61, Cys-402, and Cys-405 each act as nucleophile in the active site. 2 cysteine pairs are disulfide-bonded: Cys-58/Cys-61 and Cys-402/Cys-405. A disordered region spans residues Ser-477 to Leu-515. The segment covering Ala-484 to Glu-507 has biased composition (acidic residues). Residues Lys-512–Leu-515 carry the Prevents secretion from ER motif.

Belongs to the protein disulfide isomerase family. Heterodimer; heterodimerizes with the protein microsomal triglyceride transfer MTTP. Homodimer. Monomers and homotetramers may also occur. Also constitutes the structural subunit of prolyl 4-hydroxylase. Stabilizes this enzyme and retains it in the ER without contributing to the catalytic activity. Binds UBQLN1.

Its subcellular location is the endoplasmic reticulum. It is found in the endoplasmic reticulum lumen. The protein localises to the cell membrane. The catalysed reaction is Catalyzes the rearrangement of -S-S- bonds in proteins.. In terms of biological role, this multifunctional protein catalyzes the formation, breakage and rearrangement of disulfide bonds. At the cell surface, seems to act as a reductase that cleaves disulfide bonds of proteins attached to the cell. May therefore cause structural modifications of exofacial proteins. Inside the cell, seems to form/rearrange disulfide bonds of nascent proteins. At high concentrations, functions as a chaperone that inhibits aggregation of misfolded proteins. At low concentrations, facilitates aggregation (anti-chaperone activity). Also acts a structural subunit of various enzymes such as prolyl 4-hydroxylase. The polypeptide is Protein disulfide-isomerase (P4HB) (Gallus gallus (Chicken)).